The chain runs to 492 residues: Beclin 1-associated autophagy-related key regulator (492 aa).

At Ser29 the chain carries Phosphoserine. Residues 70–180 (RDRERFIDKK…KLGDLVEKKT (111 aa)) are a coiled coil. 2 disordered regions span residues 213–232 (TSGR…MTSS) and 411–473 (GVAG…AGGM). Residues 222-232 (SSETDSAMTSS) are compositionally biased toward polar residues. At Ser416 the chain carries Phosphoserine. Residues 424–433 (VSDEETDLGT) are compositionally biased toward acidic residues. At Thr429 the chain carries Phosphothreonine. The segment covering 447-473 (PSQPVEVSQSQSTQASPPIASSSAGGM) has biased composition (low complexity).

Belongs to the ATG14 family. Forms homooligomers; homo-oligomerization is essential for the roles in membrane tethering and enhancement of SNARE-mediated fusion. Component of the PI3K (PI3KC3/PI3K-III/class III phosphatidylinositol 3-kinase) complex I (PI3KC3-C1) in which the core composed of the catalytic subunit PIK3C3, the regulatory subunit PIK3R4 and BECN1 is associated with ATG14. PI3KC3-C1 displays a V-shaped architecture with PIK3R4 serving as a bridge between PIK3C3 and the ATG14:BECN1 subcomplex. PI3KC3-C1 can associate with further regulatory subunits. Interacts with PIK3CB. Interacts (via coiled-coil domain) with BECN2 (via coiled-coil domain); this interaction is tighter than BECN2 self-association. Interacts with the STX17-SNAP29 binary t-SNARE complex. Interacts with NRBF2. Interacts with PIK3C3 and BECN1; this interaction is increased in the absence of TMEM39A. Interacts with STEEP1; the interaction is required for trafficking of STING1 from the endoplasmic reticulum. Interacts with ARMC3 (via ARM domains). Ubiquitinated via 'Lys-6', 'Lys-11' and 'Lys-63'-linked polyubiquitin chains on multiple lysines by MARCHF7, leading to ATG14 aggregation and loss of interaction with STX17.

The protein localises to the cytoplasm. The protein resides in the endoplasmic reticulum membrane. It is found in the preautophagosomal structure membrane. In terms of biological role, required for both basal and inducible autophagy. Determines the localization of the autophagy-specific PI3-kinase complex. Plays a role in autophagosome formation and MAP1LC3/LC3 conjugation to phosphatidylethanolamine. Promotes BECN1 translocation from the trans-Golgi network to autophagosomes. Enhances PIK3C3 activity in a BECN1-dependent manner. Essential for the autophagy-dependent phosphorylation of BECN1. Stimulates the phosphorylation of BECN1, but suppresses the phosphorylation PIK3C3 by AMPK. Binds to STX17-SNAP29 binary t-SNARE complex on autophagosomes and primes it for VAMP8 interaction to promote autophagosome-endolysosome fusion. Modulates the hepatic lipid metabolism. This Rattus norvegicus (Rat) protein is Beclin 1-associated autophagy-related key regulator.